The primary structure comprises 527 residues: Baeyer-Villiger monooxygenase (527 aa).

FAD is bound by residues Ser36, Glu56, 64–67 (TWRV), Asp76, Tyr82, and Ile125. An NADP(+)-binding site is contributed by 74-76 (ACD). Residues 199-205 (TGASAIQ), 222-223 (RT), and 308-309 (KR) each bind NADP(+). Residue Met415 coordinates FAD.

This sequence belongs to the FAD-binding monooxygenase family. The cofactor is FAD.

In terms of biological role, catalyzes a Baeyer-Villiger oxidation reaction, i.e. the insertion of an oxygen atom into a carbon-carbon bond adjacent to a carbonyl, which converts ketones to esters or lactones using NADPH and/or NADH as an electron donor. Thus, can convert bicyclo[3.2.0]hept-2-en-6-one into the oxidative lactone products 2-oxabicyclo[3.3.0]oct-6-en-3-one and 3-oxabicyclo[3.3.0]oct-6-en-2-one. Is also able to catalyze the sulfoxidation of methyl phenyl sulfide (thioanisole). The sequence is that of Baeyer-Villiger monooxygenase from Pseudomonas aeruginosa (strain ATCC 15692 / DSM 22644 / CIP 104116 / JCM 14847 / LMG 12228 / 1C / PRS 101 / PAO1).